The primary structure comprises 283 residues: (+)-O-methylkolavelool synthase (283 aa).

S-adenosyl-L-methionine contacts are provided by residues glutamine 106, 129–130 (NA), and histidine 151.

It belongs to the methyltransferase superfamily.

The catalysed reaction is (+)-kolavelool + S-adenosyl-L-methionine = (+)-O-methylkolavelool + S-adenosyl-L-homocysteine + H(+). Involved in the biosynthesis of the diterpene (+)-O-methylkolavelool. Catalyzes the transfer of a methyl group from S-adenosyl-L-methionine to the hydroxy group of (+)-kolavelool, forming (+)-O-methylkolavelool. This Herpetosiphon aurantiacus (strain ATCC 23779 / DSM 785 / 114-95) protein is (+)-O-methylkolavelool synthase.